The primary structure comprises 148 residues: uncharacterized protein (148 aa).

One can recognise an HTH asnC-type domain in the interval 4–65; that stretch reads LDKVDIQLVK…IPDLDKLGYM (62 aa). A DNA-binding region (H-T-H motif) is located at residues 23 to 42; the sequence is YRELAELMNTTRQRIARRIT.

This is an uncharacterized protein from Pyrococcus abyssi (strain GE5 / Orsay).